The chain runs to 254 residues: Coiled-coil domain-containing protein 152 (254 aa).

A coiled-coil region spans residues 61–246; the sequence is SIKEECATLH…LEQRLSVGKD (186 aa).

As to expression, detected in stomach.

In Homo sapiens (Human), this protein is Coiled-coil domain-containing protein 152 (CCDC152).